The sequence spans 395 residues: PCI domain-containing protein 2 homolog (395 aa).

The PCI domain occupies 208 to 389 (ITYKYFVGRR…NKLVVSKQNP (182 aa)).

Belongs to the CSN12 family. As to quaternary structure, component of the nuclear pore complex (NPC)-associated TREX-2/AMEX complex (anchoring and mRNA export complex), composed of e(y)2, xmas and PCID2. Interaction between the TREX-2/AMEX complex and the ORC complex is required for ORC localization to mRNPs, and consequently mRNA export. Within the TREX-2/AMEX-ORC complex, interacts with Orc3 and Orc4. Interacts with sbr/NXF1. Interacts with Moe. Interacts with nudC; required to maintain stability in the cytoplasm. In terms of processing, mono- and poly-ubiquitinated.

The protein localises to the nucleus. Its subcellular location is the cytoplasm. The protein resides in the nucleus membrane. It localises to the cytoskeleton. Required for the export of nuclear mRNAs and involved in mRNA trafficking in the cytoplasm. Component of the nuclear pore complex (NPC)-associated TREX-2/AMEX complex (anchoring and mRNA export complex) which functions in docking export-competent ribonucleoprotein particles (mRNPs) to the nuclear entrance of the nuclear pore complex (nuclear basket), thereby enabling the export of mRNAs to the cytoplasm through the nuclear pores. Within the complex, specifically promotes the association of factors involved in regulating nuclear mRNA export, such as Moe, sbr/NXF1 and the ORC complex, to the mRNPs particles. In the cytoplasm, functions independently of its role in the TREX-2/AMEX complex, to promote cytoplasmic mRNA trafficking together with nudC. Associates with translationally active polysomes. This Drosophila melanogaster (Fruit fly) protein is PCI domain-containing protein 2 homolog.